The sequence spans 253 residues: TCF3 fusion partner (253 aa).

Disordered stretches follow at residues 49-72 and 142-211; these read SGGL…GRRR and DEGS…PELA. Ser-167 is modified (phosphoserine). The segment covering 170–181 has biased composition (pro residues); the sequence is RRTPAPPEPGSP. At Thr-172 the chain carries Phosphothreonine. Phosphoserine is present on residues Ser-180 and Ser-188. Residue Thr-207 is modified to Phosphothreonine. Residue Lys-216 forms a Glycyl lysine isopeptide (Lys-Gly) (interchain with G-Cter in SUMO2) linkage. The segment at 234-253 is disordered; the sequence is VSRGPDKLLPYPTLASPASD. Phosphoserine occurs at positions 249 and 252.

In terms of assembly, interacts with NOL3; translocates NOL3 into the nucleus and negatively regulated TFPT-induced cell death. Component of the chromatin remodeling INO80 complex; specifically part of a complex module associated with the N-terminus of INO80.

It localises to the nucleus. Appears to promote apoptosis in a p53/TP53-independent manner. Functionally, putative regulatory component of the chromatin remodeling INO80 complex which is involved in transcriptional regulation, DNA replication and probably DNA repair. The polypeptide is TCF3 fusion partner (TFPT) (Homo sapiens (Human)).